Here is a 768-residue protein sequence, read N- to C-terminus: DNA replication licensing factor MCM3 homolog 3 (768 aa).

The region spanning 290–497 is the MCM domain; that stretch reads TFDLLGNSLA…IDRQISEHVA (208 aa). 340–347 contributes to the ATP binding site; sequence GDPSVAKS. An Arginine finger motif is present at residues 472–475; it reads SRFD. Over residues 661–670 the composition is skewed to basic and acidic residues; that stretch reads EMKQQADHDA. The segment at 661–690 is disordered; that stretch reads EMKQQADHDAGATGGTVDGHGSSGNDPMDV. Residues 672-682 are compositionally biased toward gly residues; sequence ATGGTVDGHGS.

Belongs to the MCM family.

The protein localises to the nucleus. It carries out the reaction ATP + H2O = ADP + phosphate + H(+). Functionally, acts as a factor that allows the DNA to undergo a single round of replication per cell cycle. Required for DNA replication and cell proliferation. May act as a component of the MCM complex which is the putative replicative helicase of the replication licensing system in eukaryotic cells. The sequence is that of DNA replication licensing factor MCM3 homolog 3 (ROA3) from Zea mays (Maize).